The primary structure comprises 565 residues: Urocanate hydratase (565 aa).

Residues 61-62 (GG), Gln139, 185-187 (GMG), Glu205, Arg210, 251-252 (NA), 272-276 (QTSAH), 282-283 (YL), and Tyr331 contribute to the NAD(+) site. Residue Cys419 is part of the active site. Residues 453 to 472 (LDSGSVASPNRETESMRDGS) are disordered. Basic and acidic residues predominate over residues 463-472 (RETESMRDGS). Gly501 is a binding site for NAD(+).

The protein belongs to the urocanase family. It depends on NAD(+) as a cofactor.

Its subcellular location is the cytoplasm. It catalyses the reaction 4-imidazolone-5-propanoate = trans-urocanate + H2O. It functions in the pathway amino-acid degradation; L-histidine degradation into L-glutamate; N-formimidoyl-L-glutamate from L-histidine: step 2/3. Its function is as follows. Catalyzes the conversion of urocanate to 4-imidazolone-5-propionate. This is Urocanate hydratase from Pseudomonas syringae pv. tomato (strain ATCC BAA-871 / DC3000).